The chain runs to 179 residues: Peptidyl-tRNA hydrolase 2, mitochondrial (179 aa).

The helical transmembrane segment at 15-37 (STLGLAVGVACGMCLGWSLRVCF) threads the bilayer. Residues lysine 47, lysine 76, lysine 81, lysine 95, lysine 106, lysine 115, lysine 171, and lysine 177 each participate in a glycyl lysine isopeptide (Lys-Gly) (interchain with G-Cter in ubiquitin) cross-link.

The protein belongs to the PTH2 family. In terms of assembly, monomer. In terms of processing, ubiquitinated by PRKN during mitophagy, leading to its degradation and enhancement of mitophagy. Deubiquitinated by USP30.

The protein localises to the mitochondrion outer membrane. It catalyses the reaction an N-acyl-L-alpha-aminoacyl-tRNA + H2O = an N-acyl-L-amino acid + a tRNA + H(+). In terms of biological role, peptidyl-tRNA hydrolase which releases tRNAs from the ribosome during protein synthesis. Promotes caspase-independent apoptosis by regulating the function of two transcriptional regulators, AES and TLE1. The chain is Peptidyl-tRNA hydrolase 2, mitochondrial (PTRH2) from Homo sapiens (Human).